The primary structure comprises 392 residues: Chorismate synthase (392 aa).

NADP(+) is bound by residues Arg40 and Arg46. FMN contacts are provided by residues 129-131, 257-258, Gly302, 317-321, and Arg343; these read RSS, QA, and KPIAT.

Belongs to the chorismate synthase family. Homotetramer. It depends on FMNH2 as a cofactor.

It carries out the reaction 5-O-(1-carboxyvinyl)-3-phosphoshikimate = chorismate + phosphate. The protein operates within metabolic intermediate biosynthesis; chorismate biosynthesis; chorismate from D-erythrose 4-phosphate and phosphoenolpyruvate: step 7/7. In terms of biological role, catalyzes the anti-1,4-elimination of the C-3 phosphate and the C-6 proR hydrogen from 5-enolpyruvylshikimate-3-phosphate (EPSP) to yield chorismate, which is the branch point compound that serves as the starting substrate for the three terminal pathways of aromatic amino acid biosynthesis. This reaction introduces a second double bond into the aromatic ring system. The polypeptide is Chorismate synthase (Chloroherpeton thalassium (strain ATCC 35110 / GB-78)).